Reading from the N-terminus, the 272-residue chain is Dermonecrotic toxin SpeSicTox-betaIB2a (272 aa).

The active site involves His5. The Mg(2+) site is built by Glu25 and Asp27. His41 acts as the Nucleophile in catalysis. 2 cysteine pairs are disulfide-bonded: Cys45–Cys51 and Cys47–Cys191. Asp85 is a binding site for Mg(2+).

This sequence belongs to the arthropod phospholipase D family. Class II subfamily. The cofactor is Mg(2+). As to expression, expressed by the venom gland.

It is found in the secreted. It carries out the reaction an N-(acyl)-sphingosylphosphocholine = an N-(acyl)-sphingosyl-1,3-cyclic phosphate + choline. The catalysed reaction is an N-(acyl)-sphingosylphosphoethanolamine = an N-(acyl)-sphingosyl-1,3-cyclic phosphate + ethanolamine. It catalyses the reaction a 1-acyl-sn-glycero-3-phosphocholine = a 1-acyl-sn-glycero-2,3-cyclic phosphate + choline. The enzyme catalyses a 1-acyl-sn-glycero-3-phosphoethanolamine = a 1-acyl-sn-glycero-2,3-cyclic phosphate + ethanolamine. Its function is as follows. Dermonecrotic toxins cleave the phosphodiester linkage between the phosphate and headgroup of certain phospholipids (sphingolipid and lysolipid substrates), forming an alcohol (often choline) and a cyclic phosphate. This toxin acts on sphingomyelin (SM). It may also act on ceramide phosphoethanolamine (CPE), lysophosphatidylcholine (LPC) and lysophosphatidylethanolamine (LPE), but not on lysophosphatidylserine (LPS), and lysophosphatidylglycerol (LPG). It acts by transphosphatidylation, releasing exclusively cyclic phosphate products as second products. Induces dermonecrosis, hemolysis, increased vascular permeability, edema, inflammatory response, and platelet aggregation. In Sicarius peruensis (Six-eyed sand spider), this protein is Dermonecrotic toxin SpeSicTox-betaIB2a.